We begin with the raw amino-acid sequence, 200 residues long: NADH-quinone oxidoreductase subunit C (200 aa).

It belongs to the complex I 30 kDa subunit family. NDH-1 is composed of 14 different subunits. Subunits NuoB, C, D, E, F, and G constitute the peripheral sector of the complex.

Its subcellular location is the cell inner membrane. The enzyme catalyses a quinone + NADH + 5 H(+)(in) = a quinol + NAD(+) + 4 H(+)(out). NDH-1 shuttles electrons from NADH, via FMN and iron-sulfur (Fe-S) centers, to quinones in the respiratory chain. The immediate electron acceptor for the enzyme in this species is believed to be ubiquinone. Couples the redox reaction to proton translocation (for every two electrons transferred, four hydrogen ions are translocated across the cytoplasmic membrane), and thus conserves the redox energy in a proton gradient. The sequence is that of NADH-quinone oxidoreductase subunit C from Burkholderia multivorans (strain ATCC 17616 / 249).